The chain runs to 260 residues: Cytochrome c oxidase subunit 3 (260 aa).

Residues 1–15 (MAHQAHAYHMVDPSP) lie on the Mitochondrial matrix side of the membrane. The helical transmembrane segment at 16–34 (WPLTGAVAALLLTSGLAMW) threads the bilayer. Residues 35 to 40 (FHFGSM) lie on the Mitochondrial intermembrane side of the membrane. A helical membrane pass occupies residues 41-66 (ILLTLGLITMVLTMIQWWRDVIREGT). Residues 67–72 (FQGHHT) are Mitochondrial matrix-facing. The chain crosses the membrane as a helical span at residues 73–105 (PPVQKGLRYGMILFITSEVFFFIGFFWAFYNSS). The Mitochondrial intermembrane portion of the chain corresponds to 106–128 (LAPTYELGECWPPTGITPLNPFE). A helical membrane pass occupies residues 129–152 (VPLLNTAVLLASGVTVTWAHHSIM). Residues 153 to 155 (HGD) are Mitochondrial matrix-facing. The helical transmembrane segment at 156–183 (RKEAIQSLTLTILLGLYFTALQAMEYYE) threads the bilayer. Topologically, residues 184 to 190 (APFTIAD) are mitochondrial intermembrane. A helical membrane pass occupies residues 191–223 (GVYGSTFFVATGFHGLHVIIGSLFLSVCLLRQI). Residues 224-232 (QYHFTSKHH) lie on the Mitochondrial matrix side of the membrane. A helical transmembrane segment spans residues 233–255 (FGFEAAWYWHFVDVVWLFLYVSI). Residues 256-260 (YWWGS) are Mitochondrial intermembrane-facing.

The protein belongs to the cytochrome c oxidase subunit 3 family. As to quaternary structure, component of the cytochrome c oxidase (complex IV, CIV), a multisubunit enzyme composed of 14 subunits. The complex is composed of a catalytic core of 3 subunits MT-CO1, MT-CO2 and MT-CO3, encoded in the mitochondrial DNA, and 11 supernumerary subunits COX4I, COX5A, COX5B, COX6A, COX6B, COX6C, COX7A, COX7B, COX7C, COX8 and NDUFA4, which are encoded in the nuclear genome. The complex exists as a monomer or a dimer and forms supercomplexes (SCs) in the inner mitochondrial membrane with NADH-ubiquinone oxidoreductase (complex I, CI) and ubiquinol-cytochrome c oxidoreductase (cytochrome b-c1 complex, complex III, CIII), resulting in different assemblies (supercomplex SCI(1)III(2)IV(1) and megacomplex MCI(2)III(2)IV(2)).

Its subcellular location is the mitochondrion inner membrane. It catalyses the reaction 4 Fe(II)-[cytochrome c] + O2 + 8 H(+)(in) = 4 Fe(III)-[cytochrome c] + 2 H2O + 4 H(+)(out). Functionally, component of the cytochrome c oxidase, the last enzyme in the mitochondrial electron transport chain which drives oxidative phosphorylation. The respiratory chain contains 3 multisubunit complexes succinate dehydrogenase (complex II, CII), ubiquinol-cytochrome c oxidoreductase (cytochrome b-c1 complex, complex III, CIII) and cytochrome c oxidase (complex IV, CIV), that cooperate to transfer electrons derived from NADH and succinate to molecular oxygen, creating an electrochemical gradient over the inner membrane that drives transmembrane transport and the ATP synthase. Cytochrome c oxidase is the component of the respiratory chain that catalyzes the reduction of oxygen to water. Electrons originating from reduced cytochrome c in the intermembrane space (IMS) are transferred via the dinuclear copper A center (CU(A)) of subunit 2 and heme A of subunit 1 to the active site in subunit 1, a binuclear center (BNC) formed by heme A3 and copper B (CU(B)). The BNC reduces molecular oxygen to 2 water molecules using 4 electrons from cytochrome c in the IMS and 4 protons from the mitochondrial matrix. The sequence is that of Cytochrome c oxidase subunit 3 (mt-co3) from Xenopus laevis (African clawed frog).